Reading from the N-terminus, the 68-residue chain is Phycobilisome 7.8 kDa linker polypeptide, allophycocyanin-associated, core (68 aa).

Residues 2–57 enclose the CpcD-like domain; sequence ARLFKVTACVPSQTRIRTQRELQNTYFTKLVPFENWFREQQRIMKMGGKIVKVELA.

This sequence belongs to the phycobilisome linker protein family.

The protein localises to the cellular thylakoid membrane. Functionally, rod linker protein, associated with allophycocyanin. Linker polypeptides determine the state of aggregation and the location of the disk-shaped phycobiliprotein units within the phycobilisome and modulate their spectroscopic properties in order to mediate a directed and optimal energy transfer. This Microchaete diplosiphon (Fremyella diplosiphon) protein is Phycobilisome 7.8 kDa linker polypeptide, allophycocyanin-associated, core (apcC).